We begin with the raw amino-acid sequence, 95 residues long: Small ribosomal subunit protein bS16 (95 aa).

This sequence belongs to the bacterial ribosomal protein bS16 family.

In Streptococcus pneumoniae (strain CGSP14), this protein is Small ribosomal subunit protein bS16.